The chain runs to 1132 residues: Sentrin-specific protease 6 (1132 aa).

Disordered stretches follow at residues 23–51 (SKRD…DGAN) and 327–388 (LPGG…VPST). Ser41, Ser355, Ser356, Ser371, and Ser373 each carry phosphoserine. Thr436 carries the post-translational modification Phosphothreonine. A Glycyl lysine isopeptide (Lys-Gly) (interchain with G-Cter in SUMO2) cross-link involves residue Lys648. The segment at 686–1132 (ISVTNEDLHC…QYASASGGSE (447 aa)) is protease. Catalysis depends on residues His785 and Asp936. A Phosphoserine modification is found at Ser938. Residue Cys1049 is part of the active site. Ser1131 carries the post-translational modification Phosphoserine.

This sequence belongs to the peptidase C48 family. In terms of assembly, interacts with RXRA. Forms a complex with KAT5-TIP60 and UBE2I in response to UV irradiation. Interacts with RPA1 to maintain it in hyposumoylated state during S phase preventing DNA repair initiation.

It localises to the nucleus. It participates in protein modification; protein sumoylation. Protease that deconjugates SUMO1, SUMO2 and SUMO3 from targeted proteins. Processes preferentially poly-SUMO2 and poly-SUMO3 chains, but does not efficiently process SUMO1, SUMO2 and SUMO3 precursors. Deconjugates SUMO1 from RXRA, leading to transcriptional activation. Involved in chromosome alignment and spindle assembly, by regulating the kinetochore CENPH-CENPI-CENPK complex. Desumoylates PML and CENPI, protecting them from degradation by the ubiquitin ligase RNF4, which targets polysumoylated proteins for proteasomal degradation. Also desumoylates RPA1, thus preventing recruitment of RAD51 to the DNA damage foci to initiate DNA repair through homologous recombination. The sequence is that of Sentrin-specific protease 6 (Senp6) from Mus musculus (Mouse).